We begin with the raw amino-acid sequence, 242 residues long: ATP synthase subunit a (242 aa).

6 helical membrane-spanning segments follow: residues 29–49 (SSIYMLLASILALTYFYLAFY), 84–104 (FIPLVFSLFIFILFCNLLGMT), 114–134 (IIVTFTLAILVFLIVTIVGFV), 140–160 (FLTLFLPHGTPLWLAPLMIVI), 181–201 (MAGHVLLKVIAGFTVSLMIYL), and 203–223 (FLPIPIMVILIGFEIFVAILQ).

This sequence belongs to the ATPase A chain family. As to quaternary structure, F-type ATPases have 2 components, CF(1) - the catalytic core - and CF(0) - the membrane proton channel. CF(1) has five subunits: alpha(3), beta(3), gamma(1), delta(1), epsilon(1). CF(0) has three main subunits: a(1), b(2) and c(9-12). The alpha and beta chains form an alternating ring which encloses part of the gamma chain. CF(1) is attached to CF(0) by a central stalk formed by the gamma and epsilon chains, while a peripheral stalk is formed by the delta and b chains.

The protein resides in the cell inner membrane. In terms of biological role, key component of the proton channel; it plays a direct role in the translocation of protons across the membrane. In Rickettsia rickettsii (strain Sheila Smith), this protein is ATP synthase subunit a.